The sequence spans 102 residues: Large ribosomal subunit protein uL24 (102 aa).

It belongs to the universal ribosomal protein uL24 family. As to quaternary structure, part of the 50S ribosomal subunit.

Functionally, one of two assembly initiator proteins, it binds directly to the 5'-end of the 23S rRNA, where it nucleates assembly of the 50S subunit. In terms of biological role, one of the proteins that surrounds the polypeptide exit tunnel on the outside of the subunit. In Rhizobium rhizogenes (strain K84 / ATCC BAA-868) (Agrobacterium radiobacter), this protein is Large ribosomal subunit protein uL24.